The primary structure comprises 221 residues: Uracil-DNA glycosylase 1 (221 aa).

Asp61 functions as the Proton acceptor in the catalytic mechanism.

It belongs to the uracil-DNA glycosylase (UDG) superfamily. UNG family.

The protein resides in the cytoplasm. The enzyme catalyses Hydrolyzes single-stranded DNA or mismatched double-stranded DNA and polynucleotides, releasing free uracil.. Functionally, excises uracil residues from the DNA which can arise as a result of misincorporation of dUMP residues by DNA polymerase or due to deamination of cytosine. This is Uracil-DNA glycosylase 1 from Listeria innocua serovar 6a (strain ATCC BAA-680 / CLIP 11262).